A 332-amino-acid polypeptide reads, in one-letter code: Ketol-acid reductoisomerase (NAD(+)) (332 aa).

The KARI N-terminal Rossmann domain maps to 1–181 (MKIYYDQDAD…GATRAGVIQT (181 aa)). Residues 24 to 27 (YGSQ), Ser-50, and 82 to 85 (DEKQ) contribute to the NAD(+) site. His-107 is a catalytic residue. Gly-133 contacts NAD(+). A KARI C-terminal knotted domain is found at 182 to 327 (TFKEETETDL…ARLRGMMPWL (146 aa)). Positions 190, 194, 226, and 230 each coordinate Mg(2+). Residue Ser-251 coordinates substrate.

This sequence belongs to the ketol-acid reductoisomerase family. It depends on Mg(2+) as a cofactor.

It carries out the reaction (2R)-2,3-dihydroxy-3-methylbutanoate + NAD(+) = (2S)-2-acetolactate + NADH + H(+). It functions in the pathway amino-acid biosynthesis; L-isoleucine biosynthesis; L-isoleucine from 2-oxobutanoate: step 2/4. Its pathway is amino-acid biosynthesis; L-valine biosynthesis; L-valine from pyruvate: step 2/4. Involved in the biosynthesis of branched-chain amino acids (BCAA). Catalyzes an alkyl-migration followed by a ketol-acid reduction of (S)-2-acetolactate (S2AL) to yield (R)-2,3-dihydroxy-isovalerate. In the isomerase reaction, S2AL is rearranged via a Mg-dependent methyl migration to produce 3-hydroxy-3-methyl-2-ketobutyrate (HMKB). In the reductase reaction, this 2-ketoacid undergoes a metal-dependent reduction by NADH to yield (R)-2,3-dihydroxy-isovalerate. The sequence is that of Ketol-acid reductoisomerase (NAD(+)) from Thermacetogenium phaeum (strain ATCC BAA-254 / DSM 26808 / PB).